The following is a 108-amino-acid chain: Ig kappa chain V-V region HP 124E1 (108 aa).

The tract at residues 1-23 (DIQMTQTTSSLSASLGDRVTISC) is framework-1. A disulfide bridge links Cys23 with Cys88. Residues 24–34 (RASQDINNYLN) form a complementarity-determining-1 region. The segment at 35 to 49 (WYQQKPDGTVKLLIY) is framework-2. The tract at residues 50-56 (YTSRLHS) is complementarity-determining-2. The interval 57–88 (GVPSRFSGSGSGTDYSLTISNLEQEDIATYFC) is framework-3. The interval 89 to 97 (QQGKTLPRT) is complementarity-determining-3. A framework-4 region spans residues 98–108 (FGGGTKLEIKR).

The sequence is that of Ig kappa chain V-V region HP 124E1 from Mus musculus (Mouse).